Here is a 172-residue protein sequence, read N- to C-terminus: MMPTERIAVYPGTFDPVTNGHLDIISRAARLVDRLTVGVAVNAGKGPLFSLEERVEMVRVAVDKLPTNGATITVVPFANLLMDFACAQGASMIFRGLRAISDFEYEFQMCGMNSRLNSKVETVFLMASERSQFISSRFVKEIGRLGGDIGGFVPAHVRDRLLDRFEEDAESA.

Thr-13 contacts substrate. ATP-binding positions include 13 to 14 and His-21; that span reads TF. 3 residues coordinate substrate: Lys-45, Leu-81, and Arg-95. ATP contacts are provided by residues 96-98, Glu-106, and 131-137; these read GLR and SQFISSR.

Belongs to the bacterial CoaD family. As to quaternary structure, homohexamer. Mg(2+) serves as cofactor.

It is found in the cytoplasm. It catalyses the reaction (R)-4'-phosphopantetheine + ATP + H(+) = 3'-dephospho-CoA + diphosphate. It functions in the pathway cofactor biosynthesis; coenzyme A biosynthesis; CoA from (R)-pantothenate: step 4/5. Reversibly transfers an adenylyl group from ATP to 4'-phosphopantetheine, yielding dephospho-CoA (dPCoA) and pyrophosphate. This chain is Phosphopantetheine adenylyltransferase, found in Rhodospirillum rubrum (strain ATCC 11170 / ATH 1.1.1 / DSM 467 / LMG 4362 / NCIMB 8255 / S1).